Here is a 233-residue protein sequence, read N- to C-terminus: LexA repressor (233 aa).

The H-T-H motif DNA-binding region spans 26-46 (FDEMKDALDLRSKSGIHRLIT). Active-site for autocatalytic cleavage activity residues include Ser154 and Lys192.

Belongs to the peptidase S24 family. Homodimer.

The enzyme catalyses Hydrolysis of Ala-|-Gly bond in repressor LexA.. Represses a number of genes involved in the response to DNA damage (SOS response), including recA and lexA. In the presence of single-stranded DNA, RecA interacts with LexA causing an autocatalytic cleavage which disrupts the DNA-binding part of LexA, leading to derepression of the SOS regulon and eventually DNA repair. This is LexA repressor from Nitrobacter hamburgensis (strain DSM 10229 / NCIMB 13809 / X14).